The sequence spans 214 residues: MSDEEKSETRNFFMGYDDLSDSSSDSESRSGPEATASSAPAEPQQSRKRAAEPLPRPDELFRSVSKPAFLYNPLNKAIDWDSRAVRAPEEPPKEFKVWKSSAVPPPQSYVTEENKKKAPAGMDMAIKWSNVYEDNGDDAPQAHRGPAHFLPEEEEEEQQPDSDDDSSSKLSKSAKKRRVETFQQKEKRKRDIGQATSDKNFVEEEKRILRQCLD.

2 disordered regions span residues 1 to 66 (MSDE…SVSK) and 81 to 214 (DSRA…QCLD). Low complexity predominate over residues 32-44 (PEATASSAPAEPQ). 2 stretches are compositionally biased toward basic and acidic residues: residues 49-61 (RAAE…DELF) and 81-97 (DSRA…EFKV). Residues 152–165 (EEEEEEQQPDSDDD) are compositionally biased toward acidic residues. Serine 162 is modified (phosphoserine). Basic and acidic residues-rich tracts occupy residues 179–192 (VETF…KRDI) and 200–214 (NFVE…QCLD).

The protein belongs to the UPF0690 family.

In Danio rerio (Zebrafish), this protein is UPF0690 protein C1orf52 homolog.